A 957-amino-acid polypeptide reads, in one-letter code: Glycine dehydrogenase (decarboxylating) (957 aa).

Position 708 is an N6-(pyridoxal phosphate)lysine (Lys708).

The protein belongs to the GcvP family. In terms of assembly, the glycine cleavage system is composed of four proteins: P, T, L and H. Pyridoxal 5'-phosphate serves as cofactor.

It catalyses the reaction N(6)-[(R)-lipoyl]-L-lysyl-[glycine-cleavage complex H protein] + glycine + H(+) = N(6)-[(R)-S(8)-aminomethyldihydrolipoyl]-L-lysyl-[glycine-cleavage complex H protein] + CO2. Functionally, the glycine cleavage system catalyzes the degradation of glycine. The P protein binds the alpha-amino group of glycine through its pyridoxal phosphate cofactor; CO(2) is released and the remaining methylamine moiety is then transferred to the lipoamide cofactor of the H protein. This chain is Glycine dehydrogenase (decarboxylating), found in Escherichia coli O17:K52:H18 (strain UMN026 / ExPEC).